The chain runs to 568 residues: Potassium-transporting ATPase potassium-binding subunit (568 aa).

10 helical membrane-spanning segments follow: residues 1–21, 60–80, 129–149, 174–194, 251–271, 278–298, 381–401, 420–440, 488–508, and 528–548; these read MWLT…LAVP, GLAL…LLRA, AITF…AGFI, VMLP…VPQA, IHIL…GSML, WVLF…VFTA, VGLI…GMMI, VMLA…LAAV, IGLA…ALAG, and PLFM…TFLP.

This sequence belongs to the KdpA family. The system is composed of three essential subunits: KdpA, KdpB and KdpC.

Its subcellular location is the cell inner membrane. In terms of biological role, part of the high-affinity ATP-driven potassium transport (or Kdp) system, which catalyzes the hydrolysis of ATP coupled with the electrogenic transport of potassium into the cytoplasm. This subunit binds the periplasmic potassium ions and delivers the ions to the membrane domain of KdpB through an intramembrane tunnel. This chain is Potassium-transporting ATPase potassium-binding subunit, found in Delftia acidovorans (strain DSM 14801 / SPH-1).